Reading from the N-terminus, the 344-residue chain is L-rhamnose-proton symporter (344 aa).

10 consecutive transmembrane segments (helical) span residues 4 to 24 (AITM…CFYA), 38 to 58 (WSVG…ATLL), 68 to 88 (FSAS…IGNI), 101 to 121 (MGIG…TPII), 131 to 151 (TQGG…VGIV), 175 to 195 (LLLA…MNAA), 214 to 234 (LPSY…FCFI), 259 to 279 (LLLS…YAWG), 290 to 310 (MSWM…GLVL), and 323 to 343 (VLSL…LGMA).

Belongs to the L-rhamnose transporter (TC 2.A.7.6) family.

It localises to the cell inner membrane. It catalyses the reaction L-rhamnopyranose(in) + H(+)(in) = L-rhamnopyranose(out) + H(+)(out). Functionally, uptake of L-rhamnose across the cytoplasmic membrane with the concomitant transport of protons into the cell (symport system). The chain is L-rhamnose-proton symporter from Klebsiella pneumoniae subsp. pneumoniae (strain ATCC 700721 / MGH 78578).